We begin with the raw amino-acid sequence, 252 residues long: tRNA (guanine-N(1)-)-methyltransferase (252 aa).

S-adenosyl-L-methionine-binding positions include G116 and 135–140; that span reads LGDYVL.

The protein belongs to the RNA methyltransferase TrmD family. Homodimer.

Its subcellular location is the cytoplasm. The enzyme catalyses guanosine(37) in tRNA + S-adenosyl-L-methionine = N(1)-methylguanosine(37) in tRNA + S-adenosyl-L-homocysteine + H(+). Its function is as follows. Specifically methylates guanosine-37 in various tRNAs. In Limosilactobacillus reuteri (strain DSM 20016) (Lactobacillus reuteri), this protein is tRNA (guanine-N(1)-)-methyltransferase.